The following is a 481-amino-acid chain: 2-succinylbenzoate--CoA ligase (481 aa).

The protein belongs to the ATP-dependent AMP-binding enzyme family. MenE subfamily.

The enzyme catalyses 2-succinylbenzoate + ATP + CoA = 2-succinylbenzoyl-CoA + AMP + diphosphate. It participates in quinol/quinone metabolism; 1,4-dihydroxy-2-naphthoate biosynthesis; 1,4-dihydroxy-2-naphthoate from chorismate: step 5/7. Its pathway is quinol/quinone metabolism; menaquinone biosynthesis. Functionally, converts 2-succinylbenzoate (OSB) to 2-succinylbenzoyl-CoA (OSB-CoA). This Bacillus cereus (strain Q1) protein is 2-succinylbenzoate--CoA ligase.